A 91-amino-acid chain; its full sequence is Large ribosomal subunit protein eL37B (91 aa).

Residues cysteine 19, cysteine 22, cysteine 34, and cysteine 37 each coordinate Zn(2+). The C4-type zinc finger occupies 19–37 (CRRCGKRSFHIQKSTCACC).

The protein belongs to the eukaryotic ribosomal protein eL37 family. Component of the large ribosomal subunit (LSU). Mature yeast ribosomes consist of a small (40S) and a large (60S) subunit. The 40S small subunit contains 1 molecule of ribosomal RNA (18S rRNA) and at least 33 different proteins. The large 60S subunit contains 3 rRNA molecules (25S, 5.8S and 5S rRNA) and at least 46 different proteins. It depends on Zn(2+) as a cofactor.

Its subcellular location is the cytoplasm. In terms of biological role, component of the ribosome, a large ribonucleoprotein complex responsible for the synthesis of proteins in the cell. The small ribosomal subunit (SSU) binds messenger RNAs (mRNAs) and translates the encoded message by selecting cognate aminoacyl-transfer RNA (tRNA) molecules. The large subunit (LSU) contains the ribosomal catalytic site termed the peptidyl transferase center (PTC), which catalyzes the formation of peptide bonds, thereby polymerizing the amino acids delivered by tRNAs into a polypeptide chain. The nascent polypeptides leave the ribosome through a tunnel in the LSU and interact with protein factors that function in enzymatic processing, targeting, and the membrane insertion of nascent chains at the exit of the ribosomal tunnel. In Schizosaccharomyces pombe (strain 972 / ATCC 24843) (Fission yeast), this protein is Large ribosomal subunit protein eL37B (rpl3702).